Reading from the N-terminus, the 413-residue chain is Phosphoribosylamine--glycine ligase (413 aa).

An ATP-grasp domain is found at 108–310; sequence KQLMDKYRIP…LMQLIIDLEN (203 aa). 134 to 190 is an ATP binding site; sequence VETCDLPIVIKKDGLAAGKGVIIAFTREDALDGVKKIYQEEKGKVVFESYLEGEEFS. Mg(2+)-binding residues include Glu280 and Asn282.

This sequence belongs to the GARS family. Mg(2+) serves as cofactor. It depends on Mn(2+) as a cofactor.

The enzyme catalyses 5-phospho-beta-D-ribosylamine + glycine + ATP = N(1)-(5-phospho-beta-D-ribosyl)glycinamide + ADP + phosphate + H(+). The protein operates within purine metabolism; IMP biosynthesis via de novo pathway; N(1)-(5-phospho-D-ribosyl)glycinamide from 5-phospho-alpha-D-ribose 1-diphosphate: step 2/2. The protein is Phosphoribosylamine--glycine ligase of Staphylococcus epidermidis (strain ATCC 12228 / FDA PCI 1200).